A 152-amino-acid chain; its full sequence is Smith-Magenis syndrome chromosomal region candidate gene 5 protein homolog (152 aa).

Positions 41–77 (TPCAGPSSQAPPQPPQASPPAAPDHSRTPSLLASSHS) are disordered. Over residues 49 to 62 (QAPPQPPQASPPAA) the composition is skewed to pro residues.

This Macaca fascicularis (Crab-eating macaque) protein is Smith-Magenis syndrome chromosomal region candidate gene 5 protein homolog (SMCR5).